Here is a 276-residue protein sequence, read N- to C-terminus: Hydroxyethylthiazole kinase (276 aa).

Substrate-binding residues include M53 and A202.

Belongs to the Thz kinase family. Requires Mg(2+) as cofactor.

It catalyses the reaction 5-(2-hydroxyethyl)-4-methylthiazole + ATP = 4-methyl-5-(2-phosphooxyethyl)-thiazole + ADP + H(+). The protein operates within cofactor biosynthesis; thiamine diphosphate biosynthesis; 4-methyl-5-(2-phosphoethyl)-thiazole from 5-(2-hydroxyethyl)-4-methylthiazole: step 1/1. In terms of biological role, thiazole kinase involved in thiamine salvage pathway. The protein is Hydroxyethylthiazole kinase (THIM) of Arabidopsis thaliana (Mouse-ear cress).